A 371-amino-acid chain; its full sequence is Neuropeptide Y receptor type 6 (371 aa).

The Extracellular segment spans residues 1-31; it reads MEVLTNQPTPNKTSGKSNNSAFFYFESCQPP. Residues asparagine 11 and asparagine 18 are each glycosylated (N-linked (GlcNAc...) asparagine). A helical membrane pass occupies residues 32 to 52; it reads FLAILLLLIAYTVILIMGIFG. Residues 53 to 82 are Cytoplasmic-facing; the sequence is NLSLIIIIFKKQREAQNVTNILIANLSLSD. A helical transmembrane segment spans residues 83–103; that stretch reads ILVCVMCIPFTVIYTLMDHWV. At 104 to 111 the chain is on the extracellular side; sequence FGNTMCKL. Residues cysteine 109 and cysteine 196 are joined by a disulfide bond. Residues 112-132 traverse the membrane as a helical segment; that stretch reads TSYVQSVSVSVSIFSLVLIAI. Over 133 to 150 the chain is Cytoplasmic; the sequence is ERYQLIVNPRGWKPRVAH. A helical membrane pass occupies residues 151 to 171; that stretch reads AYWGIILIWLISLTLSIPLFL. Over 172–206 the chain is Extracellular; that stretch reads SYHLTNEPFHNLSLPTDIYTHQVACVEIWPSKLNQ. A glycan (N-linked (GlcNAc...) asparagine) is linked at asparagine 182. Residues 207–227 traverse the membrane as a helical segment; that stretch reads LLFSTSLFMLQYFVPLGFILI. Residues 228–263 are Cytoplasmic-facing; that stretch reads CYLKIVLCLRKRTRQVDRRKENKSRLNENKRVNVML. The chain crosses the membrane as a helical span at residues 264–284; that stretch reads ISIVVTFGACWLPLNIFNVIF. Residues 285–297 are Extracellular-facing; that stretch reads DWYHEMLMSCHHD. The chain crosses the membrane as a helical span at residues 298–318; sequence LVFVVCHLIAMVSTCINPLFY. At 319-371 the chain is on the cytoplasmic side; the sequence is GFLNKNFQKDLMMLIHHCWCGEPQESYENIAMSTMHTDESKGSLKLAHIPTGI. Residue cysteine 336 is the site of S-palmitoyl cysteine attachment.

It belongs to the G-protein coupled receptor 1 family. Kidney and discrete regions of the hypothalamus including the suprachiasmatic nucleus, anterior hypothalamus, bed nucleus stria terminalis, and the ventromedial nucleus.

It is found in the cell membrane. Its function is as follows. Receptor for neuropeptide Y and peptide YY. The rank order of affinity of this receptor for pancreatic polypeptides is NPY = PYY &gt;= NPY (2-36) = [Leu-31, Pro-34] NPY &gt; NPY (13-36) &gt; PP. The activity of this receptor is mediated by G proteins that inhibits adenylate cyclase activity. In Mus musculus (Mouse), this protein is Neuropeptide Y receptor type 6 (Npy6r).